The chain runs to 45 residues: Large ribosomal subunit protein bL36 (45 aa).

It belongs to the bacterial ribosomal protein bL36 family.

The protein is Large ribosomal subunit protein bL36 of Aliivibrio salmonicida (strain LFI1238) (Vibrio salmonicida (strain LFI1238)).